A 428-amino-acid chain; its full sequence is Sporulation kinase C (428 aa).

2 consecutive transmembrane segments (helical) span residues 8–28 (IISI…FYFI) and 36–56 (PVDI…AYYI). Residues 76–147 (LSEEKNRIMD…NTQIQNKASS (72 aa)) enclose the PAS domain. The 53-residue stretch at 148–200 (GMFTAKYVTKNGTIFWGEVHYKLYYDRDDQFTGSLGTMSDITERKEAEDELIE) folds into the PAC domain. Residues 221 to 426 (GIAHEVRNPL…VFQVVLPLKS (206 aa)) form the Histidine kinase domain. Histidine 224 carries the phosphohistidine; by autocatalysis modification.

As to quaternary structure, oligomerizes, probably forms homodimers; oligomerization is assisted by FloT. Interacts with FloT. Another study shows only rare colocalization with FloT or FloA membrane assemblies. KinC membrane assemblies are more mobile than FloT membrane assemblies.

The protein resides in the cell membrane. Its subcellular location is the membrane raft. The enzyme catalyses ATP + protein L-histidine = ADP + protein N-phospho-L-histidine.. In terms of biological role, phosphorylates the sporulation-regulatory protein Spo0A a transcription factor that also controls biofilm formation. Requires FloT and FloA for localization to DRMs and for activity. The sequence is that of Sporulation kinase C from Bacillus subtilis (strain 168).